We begin with the raw amino-acid sequence, 582 residues long: Urocanate reductase (582 aa).

The signal sequence occupies residues 1–20 (MHYKKSIIGIAVTATAIIAG). A lipid anchor (N-palmitoyl cysteine) is attached at Cys-21. Residue Cys-21 is the site of S-diacylglycerol cysteine attachment. At Thr-93 the chain carries FMN phosphoryl threonine. Residues Ala-143, Glu-162, Asn-170, Ser-171, Gly-175, Ala-176, Ala-285, and Asp-352 each coordinate FAD. Arg-411 serves as the catalytic Proton donor. Residues His-521, Glu-550, and Ala-565 each contribute to the FAD site.

Belongs to the FAD-dependent oxidoreductase 2 family. FRD/SDH subfamily. The cofactor is FAD. It depends on FMN as a cofactor.

Its subcellular location is the cell membrane. The enzyme catalyses dihydrourocanate + A = urocanate + AH2. Its function is as follows. Catalyzes the two-electron reduction of urocanate to dihydrourocanate (also named imidazole propionate or deamino-histidine). The physiological electron donor is unknown; it might be the membrane-bound tetraheme cytochrome c (CymA). Enables anaerobic growth with urocanate as a sole terminal electron acceptor, and thus can provide the cells with a niche where no other bacteria can compete and survive. Is unable to reduce cinnamate and other unsaturated organic acids such as acrylic, crotonic, fumaric and orotic acids. Has no fumarate reductase or succinate dehydrogenase activity. The polypeptide is Urocanate reductase (urdA) (Shewanella oneidensis (strain ATCC 700550 / JCM 31522 / CIP 106686 / LMG 19005 / NCIMB 14063 / MR-1)).